Reading from the N-terminus, the 443-residue chain is Thymidine phosphorylase (443 aa).

Belongs to the thymidine/pyrimidine-nucleoside phosphorylase family. In terms of assembly, homodimer.

The catalysed reaction is thymidine + phosphate = 2-deoxy-alpha-D-ribose 1-phosphate + thymine. It functions in the pathway pyrimidine metabolism; dTMP biosynthesis via salvage pathway; dTMP from thymine: step 1/2. In terms of biological role, the enzymes which catalyze the reversible phosphorolysis of pyrimidine nucleosides are involved in the degradation of these compounds and in their utilization as carbon and energy sources, or in the rescue of pyrimidine bases for nucleotide synthesis. This is Thymidine phosphorylase from Shewanella woodyi (strain ATCC 51908 / MS32).